We begin with the raw amino-acid sequence, 103 residues long: Small ribosomal subunit protein uS10 (103 aa).

It belongs to the universal ribosomal protein uS10 family. As to quaternary structure, part of the 30S ribosomal subunit.

Its function is as follows. Involved in the binding of tRNA to the ribosomes. This is Small ribosomal subunit protein uS10 from Thioalkalivibrio sulfidiphilus (strain HL-EbGR7).